A 499-amino-acid polypeptide reads, in one-letter code: MATVIPGDLSEVRDTQKAPSGKRKRGESKPRKNFPCQLCDKAFNSVEKLKVHSFSHTGERPYKCTHQDCTKAFVSKYKLQRHMATHSPEKTHKCNYCEKMFHRKDHLKNHLHTHDPNKETFKCEECGKSYNTKLGFKRHLALHAATSGDLTCKVCLQTFESTGVLLEHLKSHAGKSSGGVKEKKHQCEHCERRFYTRKDVRRHMVVHTGRKDFLCQYCAQRFGRKDHLTRHMKKSHNQELLKVKTEPVDFLDPFTCNMSVPIKDELLPVMSLPSSELLSKPFTNTLQLNLYNTPFQSMQSSGSTHQMITTLPLGMTCPIDMDTVHPSHHLAFKCPFSSTSYAISIPEKEQPLKGEIESYLMELQGGAPSSSQDSQASSSKLGLEPQSGSPDDGAGDLSLSKSSISISDPLNTPALDFSQLFNFIPLNGPPYNPLSVGSLGMSYSQDEAHSSVSQLPTQTQDLQDPANTVGLGSLHSLSAAFTSSLSSSTTLPRFHQAFQ.

The tract at residues 1–33 (MATVIPGDLSEVRDTQKAPSGKRKRGESKPRKN) is disordered. Residues 2–84 (ATVIPGDLSE…SKYKLQRHMA (83 aa)) form an interaction with KPNA2 region. The Nuclear localization signal signature appears at 22-25 (KRKR). C2H2-type zinc fingers lie at residues 34–56 (FPCQ…SFSH), 62–86 (YKCT…MATH), 92–114 (HKCN…LHTH), 121–143 (FKCE…LALH), 150–172 (LTCK…LKSH), 185–207 (HQCE…MVVH), and 213–236 (FLCQ…KKSH). The segment at 41-242 (KAFNSVEKLK…KKSHNQELLK (202 aa)) is decreased nuclear import with localization in the nucleus but also in the cytoplasm. Residues 243-383 (VKTEPVDFLD…SQASSSKLGL (141 aa)) are repression domain; contains 3 sumoylation motifs and massively decrease transcription activity. The segment at 243-499 (VKTEPVDFLD…TLPRFHQAFQ (257 aa)) is activates transcription; Inhibition of nuclear import due to lack of NLS and KPNA2 interaction. Glycyl lysine isopeptide (Lys-Gly) (interchain with G-Cter in SUMO) cross-links involve residues Lys-244 and Lys-263. A disordered region spans residues 364–400 (QGGAPSSSQDSQASSSKLGLEPQSGSPDDGAGDLSLS). Residues 369 to 379 (SSSQDSQASSS) show a composition bias toward low complexity. Positions 384-499 (EPQSGSPDDG…TLPRFHQAFQ (116 aa)) are massively activates transcription.

Belongs to the krueppel C2H2-type zinc-finger protein family. As to quaternary structure, interacts with KPNA2, which escorts protein to the nucleus via interaction with nuclear localization signal. Interacts with E3 SUMO-protein ligase PIAS1, PIAS2 and PIAS4. In terms of processing, sumoylated with SUMO1; which inhibits transcriptional activity, but does not affect nuclear localization. Blockers of sumoylation pathway such as SENP3 and inactive UBE2I increases transcriptional capacity. Sumoylation is increased in the presence of PIAS1. Acetylated by lysine acetyltransferase EP300; which activates transcriptional capacity. Lysine residues that are sumoylated also seem to be target for acetylation. Expressed in heart, spleen, lung, kidney, brain, testis and epididymis but not in salivary glands.

The protein localises to the nucleus. Transcription factor whose activation results in up-regulation of target genes, such as IGFII, leading to uncontrolled cell proliferation: when overexpressed in cultured cells, higher proliferation rate and transformation are observed. Other target genes such as CRLF1, CRABP2, CRIP2, PIGF are strongly induced in cells with PLAG1 induction. Proto-oncogene whose ectopic expression can trigger the development of pleomorphic adenomas of the salivary gland and lipoblastomas. Cooperates with CBFB-MYH11. The polypeptide is Zinc finger protein PLAG1 (Plag1) (Rattus norvegicus (Rat)).